Reading from the N-terminus, the 279-residue chain is Phosphatidylglycerol--prolipoprotein diacylglyceryl transferase (279 aa).

Helical transmembrane passes span 22-42, 52-72, and 89-109; these read WYGI…QAAL, LIDI…IYFV, and IWHG…SGII. A 1,2-diacyl-sn-glycero-3-phospho-(1'-sn-glycerol) is bound at residue R137. The next 2 helical transmembrane spans lie at 203–223 and 235–255; these read LGET…FVEA and IRVA…FVIY.

Belongs to the Lgt family.

It localises to the cell membrane. It carries out the reaction L-cysteinyl-[prolipoprotein] + a 1,2-diacyl-sn-glycero-3-phospho-(1'-sn-glycerol) = an S-1,2-diacyl-sn-glyceryl-L-cysteinyl-[prolipoprotein] + sn-glycerol 1-phosphate + H(+). It participates in protein modification; lipoprotein biosynthesis (diacylglyceryl transfer). Catalyzes the transfer of the diacylglyceryl group from phosphatidylglycerol to the sulfhydryl group of the N-terminal cysteine of a prolipoprotein, the first step in the formation of mature lipoproteins. The polypeptide is Phosphatidylglycerol--prolipoprotein diacylglyceryl transferase (Staphylococcus epidermidis (strain ATCC 12228 / FDA PCI 1200)).